Consider the following 220-residue polypeptide: Ribosome maturation factor RimP (220 aa).

Low complexity predominate over residues 1–15; the sequence is MSQRGRATRPTGPTG. Disordered stretches follow at residues 1–35 and 184–220; these read MSQRGRATRPTGPTGRPRRTGGQRSAGRVSRGGDL and PGRVQVEFTRPGETDGADGADEAGDFDDDDDVEGEER. The span at 198 to 220 shows a compositional bias: acidic residues; sequence DGADGADEAGDFDDDDDVEGEER.

Belongs to the RimP family.

Its subcellular location is the cytoplasm. In terms of biological role, required for maturation of 30S ribosomal subunits. The protein is Ribosome maturation factor RimP of Salinispora tropica (strain ATCC BAA-916 / DSM 44818 / JCM 13857 / NBRC 105044 / CNB-440).